A 460-amino-acid polypeptide reads, in one-letter code: Elongation factor 1-alpha (460 aa).

At glycine 2 the chain carries N,N,N-trimethylglycine. Residue lysine 3 is modified to N6,N6-dimethyllysine; alternate. The residue at position 3 (lysine 3) is an N6-methyllysine; alternate. One can recognise a tr-type G domain in the interval 6–241 (KAHINVVVIG…DAIEQPKRPT (236 aa)). A G1 region spans residues 15–22 (GHVDSGKS). 15–22 (GHVDSGKS) serves as a coordination point for GTP. Residue lysine 31 is modified to N6-methyllysine. Residues 71 to 75 (GITID) are G2. The residue at position 80 (lysine 80) is an N6,N6,N6-trimethyllysine. The segment at 92–95 (DAPG) is G3. GTP-binding positions include 92-96 (DAPGH) and 154-157 (NKMD). Residues 154-157 (NKMD) are G4. Positions 193–195 (SGF) are G5. An N6,N6-dimethyllysine; alternate modification is found at lysine 317. An N6-methyllysine; alternate modification is found at lysine 317. At lysine 391 the chain carries N6-methyllysine.

This sequence belongs to the TRAFAC class translation factor GTPase superfamily. Classic translation factor GTPase family. EF-Tu/EF-1A subfamily.

The protein resides in the cytoplasm. This protein promotes the GTP-dependent binding of aminoacyl-tRNA to the A-site of ribosomes during protein biosynthesis. The sequence is that of Elongation factor 1-alpha (TEF) from Sordaria macrospora.